Reading from the N-terminus, the 489-residue chain is Rhamnulokinase (489 aa).

13–17 (ASSGR) is a binding site for ATP. A disulfide bond links Cys68 and Cys222. Substrate is bound by residues Gly83 and 236 to 238 (HDT). The Proton acceptor role is filled by Asp237. Thr259 contacts ATP. Asn296 serves as a coordination point for substrate. Gln304 contacts ATP. Residues Cys353 and Cys370 are joined by a disulfide bond. Gly402 provides a ligand contact to ATP. Residues Cys413 and Cys417 are joined by a disulfide bond.

The protein belongs to the rhamnulokinase family. Mg(2+) serves as cofactor.

It carries out the reaction L-rhamnulose + ATP = L-rhamnulose 1-phosphate + ADP + H(+). It functions in the pathway carbohydrate degradation; L-rhamnose degradation; glycerone phosphate from L-rhamnose: step 2/3. Functionally, involved in the catabolism of L-rhamnose (6-deoxy-L-mannose). Catalyzes the transfer of the gamma-phosphate group from ATP to the 1-hydroxyl group of L-rhamnulose to yield L-rhamnulose 1-phosphate. This chain is Rhamnulokinase, found in Salmonella heidelberg (strain SL476).